Consider the following 270-residue polypeptide: uncharacterized protein (270 aa).

The signal sequence occupies residues 1–23 (MKKLLIILAATLVLVLGSSGNFR).

This is an uncharacterized protein from Archaeoglobus fulgidus (strain ATCC 49558 / DSM 4304 / JCM 9628 / NBRC 100126 / VC-16).